Consider the following 283-residue polypeptide: Thymidylate synthase (283 aa).

R22 is a binding site for dUMP. C160 functions as the Nucleophile in the catalytic mechanism. Residues 180 to 183 (RSCD), N191, and 221 to 223 (HIY) contribute to the dUMP site. Position 183 (D183) interacts with (6R)-5,10-methylene-5,6,7,8-tetrahydrofolate. S282 lines the (6R)-5,10-methylene-5,6,7,8-tetrahydrofolate pocket.

Belongs to the thymidylate synthase family. Bacterial-type ThyA subfamily. Homodimer.

The protein resides in the cytoplasm. The enzyme catalyses dUMP + (6R)-5,10-methylene-5,6,7,8-tetrahydrofolate = 7,8-dihydrofolate + dTMP. It participates in pyrimidine metabolism; dTTP biosynthesis. Functionally, catalyzes the reductive methylation of 2'-deoxyuridine-5'-monophosphate (dUMP) to 2'-deoxythymidine-5'-monophosphate (dTMP) while utilizing 5,10-methylenetetrahydrofolate (mTHF) as the methyl donor and reductant in the reaction, yielding dihydrofolate (DHF) as a by-product. This enzymatic reaction provides an intracellular de novo source of dTMP, an essential precursor for DNA biosynthesis. This chain is Thymidylate synthase, found in Pseudoalteromonas translucida (strain TAC 125).